Here is a 667-residue protein sequence, read N- to C-terminus: Glycine--tRNA ligase beta subunit (667 aa).

Belongs to the class-II aminoacyl-tRNA synthetase family. In terms of assembly, tetramer of two alpha and two beta subunits.

It is found in the cytoplasm. The enzyme catalyses tRNA(Gly) + glycine + ATP = glycyl-tRNA(Gly) + AMP + diphosphate. The chain is Glycine--tRNA ligase beta subunit from Rickettsia canadensis (strain McKiel).